A 130-amino-acid chain; its full sequence is Large ribosomal subunit protein bL12c (130 aa).

It belongs to the bacterial ribosomal protein bL12 family. As to quaternary structure, homodimer. Part of the ribosomal stalk of the 50S ribosomal subunit. Forms a multimeric L10(L12)X complex, where L10 forms an elongated spine to which 2 to 4 L12 dimers bind in a sequential fashion. Binds GTP-bound translation factors.

The protein resides in the plastid. It is found in the chloroplast. Its function is as follows. Forms part of the ribosomal stalk which helps the ribosome interact with GTP-bound translation factors. Is thus essential for accurate translation. This chain is Large ribosomal subunit protein bL12c, found in Cyanidium caldarium (Red alga).